We begin with the raw amino-acid sequence, 277 residues long: Intercellular adhesion molecule 2 (277 aa).

An N-terminal signal peptide occupies residues 1-22 (MSSFACWSLSLLILFYSPGSGE). Over 23–222 (KAFEVYIWSE…EVYEPMQDNQ (200 aa)) the chain is Extracellular. Ig-like C2-type domains follow at residues 39–98 (TESW…CSGK) and 127–196 (GEDF…LDLR). N-linked (GlcNAc...) asparagine glycans are attached at residues N45, N82, N158, N176, and N186. 3 disulfide bridges follow: C46-C91, C50-C95, and C134-C189. Residues 223-247 (MVIIIVVVSILLFLFVTSVLLCFIF) traverse the membrane as a helical segment. The Cytoplasmic portion of the chain corresponds to 248–277 (GQHWHRRRTGTYGVLAAWRRLPRAFRARPV). Residues 250–277 (HWHRRRTGTYGVLAAWRRLPRAFRARPV) form a required for interaction with EZR, MSN and RDX and co-localization to microvilli region.

The protein belongs to the immunoglobulin superfamily. ICAM family. In terms of assembly, interacts with RDX, EZR and MSN. Expressed in endothelial cells and leukocytes. High levels found in lung.

Its subcellular location is the membrane. It localises to the cell projection. It is found in the microvillus. In terms of biological role, ICAM proteins are ligands for the leukocyte adhesion protein LFA-1 (integrin alpha-L/beta-2). ICAM2 may play a role in lymphocyte recirculation by blocking LFA-1-dependent cell adhesion. It mediates adhesive interactions important for antigen-specific immune response, NK-cell mediated clearance, lymphocyte recirculation, and other cellular interactions important for immune response and surveillance. This is Intercellular adhesion molecule 2 (Icam2) from Mus musculus (Mouse).